The sequence spans 161 residues: UPF0262 protein Meso_0189 (161 aa).

It belongs to the UPF0262 family.

This chain is UPF0262 protein Meso_0189, found in Chelativorans sp. (strain BNC1).